The chain runs to 412 residues: UDP-galactose transporter homolog 1 (412 aa).

Residues 3–23 traverse the membrane as a helical segment; that stretch reads VLRLAVCISGVYAAFLLWAIA. Residues 31–51 are disordered; the sequence is FPSVHPHPHQQPHSPSDPPPG. The next 4 helical transmembrane spans lie at 58–78, 139–159, 197–217, and 222–242; these read LFLNFAQALASSLSALCYLSF, LLALLVQVSVFQTIASPIGFL, YIVVALVTVGISMFMLFAETS, and GGSDSMWGLVLLLVNLLIDGL. Asn244 carries N-linked (GlcNAc...) asparagine glycosylation. The next 4 membrane-spanning stretches (helical) occupy residues 262 to 282, 325 to 345, 355 to 375, and 379 to 399; these read MMFTMALTTQIILLPLLVLPL, SALAPLFAYALLGGLGQLFIF, TLVMVTVTRKLFTMLLSVVVF, and LTKGQWLGVGVVFAGIGVEAG.

This sequence belongs to the nucleotide-sugar transporter family. SLC35B subfamily.

The protein resides in the endoplasmic reticulum membrane. May be involved in specific transport of UDP-Gal from the cytosol to the Golgi lumen. Involved in the maintenance of optimal conditions for the folding of secretory pathway proteins in the endoplasmic reticulum. The polypeptide is UDP-galactose transporter homolog 1 (HUT1-A) (Cryptococcus neoformans var. neoformans serotype D (strain JEC21 / ATCC MYA-565) (Filobasidiella neoformans)).